The following is a 60-amino-acid chain: Beta-defensin 8 (60 aa).

The N-terminal stretch at 1–22 (MRIHYLLFTFLLVLLSPLAAFS) is a signal peptide. The propeptide occupies 23–25 (QKI). Intrachain disulfides connect C31/C58, C38/C52, and C42/C59.

Belongs to the beta-defensin family. In terms of tissue distribution, most highly expressed in testis and heart.

It localises to the secreted. Functionally, a synthetic peptide displays antimicrobial activities against S.aureus, P.aeruginosa, E.coli and B.cepacia. The antimicrobial activity against S.aureus, E.coli and B.cepacia is reduced in raised concentration of NaCl, but its action against P.aeruginosa is independent of NaCl concentration. The sequence is that of Beta-defensin 8 (Defb8) from Mus musculus (Mouse).